The following is a 37-amino-acid chain: Cytochrome b6-f complex subunit 5 (37 aa).

A helical membrane pass occupies residues Leu-5 to Ala-25.

Belongs to the PetG family. As to quaternary structure, the 4 large subunits of the cytochrome b6-f complex are cytochrome b6, subunit IV (17 kDa polypeptide, PetD), cytochrome f and the Rieske protein, while the 4 small subunits are PetG, PetL, PetM and PetN. The complex functions as a dimer.

It is found in the plastid. Its subcellular location is the chloroplast thylakoid membrane. Component of the cytochrome b6-f complex, which mediates electron transfer between photosystem II (PSII) and photosystem I (PSI), cyclic electron flow around PSI, and state transitions. PetG is required for either the stability or assembly of the cytochrome b6-f complex. This is Cytochrome b6-f complex subunit 5 from Pinus thunbergii (Japanese black pine).